The chain runs to 601 residues: Sestrin homolog (601 aa).

A compositionally biased stretch (polar residues) spans 1–11 (MISMGMTSKGQ). The interval 1 to 58 (MISMGMTSKGQNVDGAPAGNSSSEWIISSSSSPFQANKRYSLDPPFGSDYSPPASPQN) is disordered. The N-linked (GlcNAc...) asparagine glycan is linked to Asn-20. The span at 21–32 (SSSEWIISSSSS) shows a compositional bias: low complexity. Residues Asn-322 and Asn-330 are each glycosylated (N-linked (GlcNAc...) asparagine). The disordered stretch occupies residues 355 to 425 (RRSQQQDDDD…DSSSSTLSQS (71 aa)). Basic and acidic residues predominate over residues 368-379 (LHDRQQDFHNAG). Residues 380-425 (DDSQSSNNNTTTTTTTTTTTTTTTNTNTTSNSAGGGDSSSSTLSQS) are compositionally biased toward low complexity. N-linked (GlcNAc...) asparagine glycans are attached at residues Asn-387, Asn-388, Asn-406, Asn-438, and Asn-499.

Belongs to the sestrin family.

Its subcellular location is the nucleus. The protein localises to the cytoplasm. May function as a negative feedback regulator of TOR function. This Dictyostelium discoideum (Social amoeba) protein is Sestrin homolog.